The sequence spans 196 residues: HTH-type transcriptional regulator EcpR (196 aa).

The 59-residue stretch at 138 to 196 folds into the HTH luxR-type domain; that stretch reads KDIKKDKITDREMEIIRMTAQGMQPKSIARIENCSVKTVYTHRRNAEAKLYSKIYKLVQ. The H-T-H motif DNA-binding region spans 162–181; the sequence is PKSIARIENCSVKTVYTHRR.

This sequence belongs to the EcpR/MatA family.

The protein resides in the cytoplasm. Functionally, part of the ecpRABCDE operon, which encodes the E.coli common pilus (ECP). ECP is found in both commensal and pathogenic strains and plays a dual role in early-stage biofilm development and host cell recognition. Positively regulates the expression of the ecp operon. This chain is HTH-type transcriptional regulator EcpR (ecpR), found in Escherichia coli (strain K12 / DH10B).